Here is a 218-residue protein sequence, read N- to C-terminus: Small ribosomal subunit protein uS7 (218 aa).

Belongs to the universal ribosomal protein uS7 family. As to quaternary structure, part of the 30S ribosomal subunit.

Its function is as follows. One of the primary rRNA binding proteins, it binds directly to 16S rRNA where it nucleates assembly of the head domain of the 30S subunit. Is located at the subunit interface close to the decoding center. This chain is Small ribosomal subunit protein uS7 (rps7), found in Pyrococcus horikoshii (strain ATCC 700860 / DSM 12428 / JCM 9974 / NBRC 100139 / OT-3).